Consider the following 89-residue polypeptide: Small ribosomal subunit protein uS15 (89 aa).

The protein belongs to the universal ribosomal protein uS15 family. In terms of assembly, part of the 30S ribosomal subunit. Forms a bridge to the 50S subunit in the 70S ribosome, contacting the 23S rRNA.

Functionally, one of the primary rRNA binding proteins, it binds directly to 16S rRNA where it helps nucleate assembly of the platform of the 30S subunit by binding and bridging several RNA helices of the 16S rRNA. Its function is as follows. Forms an intersubunit bridge (bridge B4) with the 23S rRNA of the 50S subunit in the ribosome. The polypeptide is Small ribosomal subunit protein uS15 (Yersinia enterocolitica serotype O:8 / biotype 1B (strain NCTC 13174 / 8081)).